The chain runs to 475 residues: MSPKTETKASVGFKAGVKDYRLTYYTPEYQTKDTDILAAFRVTPQPGVPPEEAGAAVAAESSTGTWTTVWTDGLTSLDRYKGRCYDIEPVPGEETQFIAYVAYPLDLFEEGSVTNLFTSIVGNVFGFKALRALRLEDLRIPPSYSKTFQGPPHGIQVERDKLNKYGRPLLGCTIKPKLGLSAKNYGRAVYECLRGGLDFTKDDENVNSQPFMRWRDRFVFCAEALNKAQAETGEIKGHYLNATAGTCEEMMKRAIFARELGVPIVMHDYLTGGFTANTSLAHYCRDNGLLLHIHRAMHAVIDRQRNHGMHFRVLAKALRMSGGDHIHAGTVVGKLEGERDVTLGFVDLLRDDFIEKDRSRGIYFTQDWVSMPGVLPVASGGIHVWHMPALTEIFGDDSVLQFGGGTLGHPWGNAPGAVANRVALEACVQARNEGRDLAREGNEVIREACKWSPELAAACEIWKEIKFEFDVIDRL.

The propeptide occupies 1 to 2 (MS). At P3 the chain carries N-acetylproline. K14 bears the N6,N6,N6-trimethyllysine mark. 2 residues coordinate substrate: N123 and T173. K175 (proton acceptor) is an active-site residue. K177 lines the substrate pocket. Mg(2+)-binding residues include K201, D203, and E204. K201 is subject to N6-carboxylysine. H294 serves as the catalytic Proton acceptor. The substrate site is built by R295, H327, and S379.

This sequence belongs to the RuBisCO large chain family. Type I subfamily. In terms of assembly, heterohexadecamer of 8 large chains and 8 small chains; disulfide-linked. The disulfide link is formed within the large subunit homodimers. It depends on Mg(2+) as a cofactor. Post-translationally, the disulfide bond which can form in the large chain dimeric partners within the hexadecamer appears to be associated with oxidative stress and protein turnover.

The protein localises to the plastid. It is found in the chloroplast. The catalysed reaction is 2 (2R)-3-phosphoglycerate + 2 H(+) = D-ribulose 1,5-bisphosphate + CO2 + H2O. It carries out the reaction D-ribulose 1,5-bisphosphate + O2 = 2-phosphoglycolate + (2R)-3-phosphoglycerate + 2 H(+). Functionally, ruBisCO catalyzes two reactions: the carboxylation of D-ribulose 1,5-bisphosphate, the primary event in carbon dioxide fixation, as well as the oxidative fragmentation of the pentose substrate in the photorespiration process. Both reactions occur simultaneously and in competition at the same active site. The polypeptide is Ribulose bisphosphate carboxylase large chain (Pinus thunbergii (Japanese black pine)).